Reading from the N-terminus, the 148-residue chain is Snaclec 3 (148 aa).

An N-terminal signal peptide occupies residues 1–23 (MGRFISVSFGLLVVFLSLSGTEA). 3 cysteine pairs are disulfide-bonded: Cys-27–Cys-38, Cys-55–Cys-144, and Cys-121–Cys-136. One can recognise a C-type lectin domain in the interval 34–145 (YDQNCYKVFT…CSSTHNFVCK (112 aa)).

This sequence belongs to the snaclec family. As to quaternary structure, heterodimer; disulfide-linked.

It localises to the secreted. Functionally, interferes with one step of hemostasis (modulation of platelet aggregation, or coagulation cascade, for example). In Daboia siamensis (Eastern Russel's viper), this protein is Snaclec 3.